A 225-amino-acid polypeptide reads, in one-letter code: Heptaprenylglyceryl phosphate synthase (225 aa).

Sn-glycerol 1-phosphate is bound at residue Lys-6. Mg(2+) contacts are provided by Asp-8 and Thr-34. Residues Tyr-153–Gly-158, Gly-183, and Gly-203–Asn-204 each bind sn-glycerol 1-phosphate.

Belongs to the GGGP/HepGP synthase family. Group I subfamily. In terms of assembly, homodimer. Requires Mg(2+) as cofactor.

It catalyses the reaction sn-glycerol 1-phosphate + all-trans-heptaprenyl diphosphate = 3-heptaprenyl-sn-glycero-1-phosphate + diphosphate. It participates in membrane lipid metabolism; glycerophospholipid metabolism. Functionally, prenyltransferase that catalyzes in vivo the transfer of the heptaprenyl moiety of heptaprenyl pyrophosphate (HepPP; 35 carbon atoms) to the C3 hydroxyl of sn-glycerol-1-phosphate (G1P), producing heptaprenylglyceryl phosphate (HepGP). This reaction is an ether-bond-formation step in the biosynthesis of archaea-type G1P-based membrane lipids found in Bacillales. To a much lesser extent, is also able to use geranylgeranyl diphosphate (GGPP; C20) as the prenyl donor. The chain is Heptaprenylglyceryl phosphate synthase from Listeria monocytogenes serovar 1/2a (strain ATCC BAA-679 / EGD-e).